The following is a 305-amino-acid chain: Flagellin FlaB2 (305 aa).

Positions 1–18 are cleaved as a propeptide — propeptide; that stretch reads MGLQKIVKKYNKKMKRKG.

Belongs to the archaeal flagellin family. Glycosylated.

It is found in the archaeal flagellum. Functionally, flagellin is the subunit protein which polymerizes to form the filaments of archaeal flagella. This is Flagellin FlaB2 from Saccharolobus shibatae (strain ATCC 51178 / DSM 5389 / JCM 8931 / NBRC 15437 / B12) (Sulfolobus shibatae).